We begin with the raw amino-acid sequence, 532 residues long: MSFPDFSASDAHIQWQRFCDLSWYHDDLGVWLDISRMHVNASDLQQLQPRMDKAFAAMQELEAGAIANPDEQRQVGHYWLRTPELAPSSELQQHISREIDLIAAFGRDVVNGTIKAPNGEAFTDVLWIGIGGSGLGPALMIKALQNPGEGLPFHFFDNVDPNGMSNVLAGLEGRLDRTLVVTVSKSGGTPEPHLGMEQARHRLEAAGGQWAGQAVAVTMLDSKLDQQAQKEGWLKRFDMFDWVGGRTSITSAVGLLPGALIGCDIRDFLSGASQMDAATRMADLRRNPAALMAASWHVAGGGRGQRDMVVLPYRDRLEVFSRYLQQLVMESLGKRLDRNGDVVHQGIAVYGNKGSTDQHAYVQQLRDGVDNFFATFIEVLEDVSDIPTISGECPGDFLDGFLQGTRSALTESGRQSMTISMRCFDARRLGALIALFERAVGLYGELVNINAYHQPGVEAGKKAAAAILNLQGRVEAILADGVARSADEIRLALGDGTDESIFWILRHLTGNQRGFSAQGDWSQPASMRFSKG.

Catalysis depends on glutamate 330, which acts as the Proton donor. Active-site residues include histidine 359 and lysine 461.

The protein belongs to the GPI family.

It localises to the cytoplasm. It catalyses the reaction alpha-D-glucose 6-phosphate = beta-D-fructose 6-phosphate. It participates in carbohydrate biosynthesis; gluconeogenesis. It functions in the pathway carbohydrate degradation; glycolysis; D-glyceraldehyde 3-phosphate and glycerone phosphate from D-glucose: step 2/4. Catalyzes the reversible isomerization of glucose-6-phosphate to fructose-6-phosphate. The sequence is that of Glucose-6-phosphate isomerase from Synechococcus sp. (strain CC9605).